The chain runs to 1212 residues: MSDYILSAEINLPLLKWMTSFKLNSNLFSTSRNQSLKSISEIYRDLQYNIIPPKDEELQNLWTHLYDLNNYYSNSIEYNQVEKSLMGLKSKYRNSYLKGYYEIINLFQSIANDFEKLSSPISQTTTTTQIPIISFNKNSVLDAINNRKNENKENSFKFLSSFESYVPTVEEIKRIYCIDNKEILIDKSCTLPVEYKLFHSFSLLNLYVYLIIVIRIIKLIGEINRQSSNASENQEILHLLKEYSLHIKSIEEFQLQLKLNNLYYQPTKKEIILKYFVEINSNNNLNNLNNNNDNNLNNNNSNNNLNNNNNSNSNFNNDNNLNSNINSNDTSISNNNSIINNNSNNSNTNNNNNNNIINNIKIFEFSEKELKYSKRYYSYNEFTLRPAELPNNSLGIETQNLIFYTTSNYNSGNSNSGSNNSNSSNNNSSSNSLINNSGGNSNSGLIPKIKFNHHRPKDINPKIVLAVYNNILSMSKVIDKKTINSMNEIIKNNNNNNNNNSNNNNNNNDEDDSDYEENEFNKEFNNQFEFGSEIIEQDKECYICRFRSEFISFCNYCKCKMICDLCSVNKVCWNCYFKVDKVSGNEQQQQQQHFIPLEVVVKLKDRKYPRLIYMLLRSYSFRDLMNTLYQDRFERDSVISPKDRFTYKLHKTKLYNFHLVLPNCKNPFQTKEIQIFDDYSLIIALRLLMNFILSNYIIDQKEVPPPPTQPSSRPQSPPTVSPLTPLNNHHHSGGSLLEHAIARNFNNNSVEVVSDDNTSGSGTGGSNSNSNTGGSYNKFNNNNNNRKNSTGSGTNSRNNNSDNEYSYNNNNNNYNNNNNNKIINNNSIVTVENPILWNIDKFILNVIESSIDIEQSLKIPSSCIETEIEPFASGGQANIYMVKHIDWPMLSNCPEGSYVFKQFIETKDSLQLEEDIEREMYEEKIYQTYKTGESVDNFKYNFSNVEQTDKKSLETLFYEEVDKLKRLQFSDYIIKMPAISDDNPNKRGMLLECATAGSLKTNLLEYRSWKLVIRFMMDICLGMIDIHKCQIIHRDLKPDNILVFENFNSSEASDENDERQREFGGLICKITDLGASIQKELVHDNNFTSTFHTDDYVPEEYGRFQYDGEKVDIYSFGCTFFEMVTKHRYQYKHPTPLHRDFLTTDFQYIPIRIKTLIASLLAEQSQRKQSFNEVYNDLQDIYKNVIPGLPDIPLSPISTNGSQFCKRCNPQK.

A helical membrane pass occupies residues 197-217 (LFHSFSLLNLYVYLIIVIRII). N-linked (GlcNAc...) asparagine glycosylation is found at N229, N299, N309, N328, N335, N341, N344, N391, N419, N422, N426, N427, N435, and N499. The interval 288–329 (LNNNNDNNLNNNNSNNNLNNNNNSNSNFNNDNNLNSNINSND) is disordered. Disordered regions lie at residues 412-439 (GNSN…NSGG) and 489-517 (IIKN…DYEE). The segment covering 489–507 (IIKNNNNNNNNNSNNNNNN) has biased composition (low complexity). Over residues 508–517 (NDEDDSDYEE) the composition is skewed to acidic residues. Residues 673 to 693 (IQIFDDYSLIIALRLLMNFIL) traverse the membrane as a helical segment. The segment covering 703-720 (VPPPPTQPSSRPQSPPTV) has biased composition (pro residues). Disordered stretches follow at residues 703–733 (VPPP…HHSG) and 751–813 (EVVS…NNNN). In terms of domain architecture, Protein kinase spans 865–1182 (ETEIEPFASG…EVYNDLQDIY (318 aa)). ATP-binding positions include 871–879 (FASGGQANI) and K924. The active-site Proton acceptor is the D1035.

The protein belongs to the protein kinase superfamily. Ser/Thr protein kinase family.

Its subcellular location is the membrane. The catalysed reaction is L-seryl-[protein] + ATP = O-phospho-L-seryl-[protein] + ADP + H(+). It carries out the reaction L-threonyl-[protein] + ATP = O-phospho-L-threonyl-[protein] + ADP + H(+). The sequence is that of Probable serine/threonine-protein kinase DDB_G0284491 from Dictyostelium discoideum (Social amoeba).